The sequence spans 374 residues: Putative zinc finger MYND domain-containing protein R331 (374 aa).

Residues C328, C331, C341, C344, C350, C354, H362, and C366 each contribute to the Zn(2+) site. The MYND-type zinc-finger motif lies at C328–C366.

The sequence is that of Putative zinc finger MYND domain-containing protein R331 from Acanthamoeba polyphaga (Amoeba).